The chain runs to 101 residues: UPF0358 protein EF_2458 (101 aa).

It belongs to the UPF0358 family.

This is UPF0358 protein EF_2458 from Enterococcus faecalis (strain ATCC 700802 / V583).